A 349-amino-acid chain; its full sequence is tRNA pseudouridine synthase D (349 aa).

Substrate is bound at residue phenylalanine 26. Catalysis depends on aspartate 79, which acts as the Nucleophile. Asparagine 128 serves as a coordination point for substrate. Residues 154–303 (GVPNYFGSQR…VDAARRAMLV (150 aa)) form the TRUD domain. Phenylalanine 329 is a binding site for substrate.

This sequence belongs to the pseudouridine synthase TruD family.

The catalysed reaction is uridine(13) in tRNA = pseudouridine(13) in tRNA. Functionally, responsible for synthesis of pseudouridine from uracil-13 in transfer RNAs. The polypeptide is tRNA pseudouridine synthase D (Erwinia tasmaniensis (strain DSM 17950 / CFBP 7177 / CIP 109463 / NCPPB 4357 / Et1/99)).